A 276-amino-acid polypeptide reads, in one-letter code: Rhamnulose-1-phosphate aldolase (276 aa).

Glu-117 is a catalytic residue. Positions 141, 143, and 212 each coordinate Zn(2+).

It belongs to the aldolase class II family. RhaD subfamily. In terms of assembly, homotetramer. Zn(2+) is required as a cofactor.

It localises to the cytoplasm. It carries out the reaction L-rhamnulose 1-phosphate = (S)-lactaldehyde + dihydroxyacetone phosphate. Its pathway is carbohydrate degradation; L-rhamnose degradation; glycerone phosphate from L-rhamnose: step 3/3. In terms of biological role, catalyzes the reversible cleavage of L-rhamnulose-1-phosphate to dihydroxyacetone phosphate (DHAP) and L-lactaldehyde. This chain is Rhamnulose-1-phosphate aldolase, found in Klebsiella pneumoniae (strain 342).